The chain runs to 251 residues: MESYLTVIEQNGQLLVDSREVAEMVGKRHTDLLRSIDGYVAILLNAKLRSVEFFLESTYKDATGRSLKHFHLTRKGCDMVANKMTGAKGVLFTAQYVSKFEEMEKALKARPSLIDTYLDMNEDERAIAYFTERKAKRELQEQLTLAEPKVEKYDRFLNTDGLMKIGQVAKAIGIKGMGQNNLFRFLRENKVLIDGTNKNAPYQKYVERGFFQVKTQETSVGIKTITLVTPKGADFIVDLLKKHGHKREIAS.

The chain is SPbeta prophage-derived putative antirepressor protein YoqD (yoqD) from Bacillus subtilis (strain 168).